The primary structure comprises 215 residues: Thymidylate kinase (215 aa).

Residue 7–14 (GLDGSGKT) participates in ATP binding.

Belongs to the thymidylate kinase family.

The enzyme catalyses dTMP + ATP = dTDP + ADP. Functionally, phosphorylation of dTMP to form dTDP in both de novo and salvage pathways of dTTP synthesis. The polypeptide is Thymidylate kinase (Mycoplasmopsis agalactiae (strain NCTC 10123 / CIP 59.7 / PG2) (Mycoplasma agalactiae)).